We begin with the raw amino-acid sequence, 624 residues long: Probable pectinesterase/pectinesterase inhibitor 47 (624 aa).

An N-terminal signal peptide occupies residues 1-19; sequence MQTHSSSLVFLALLCLSWA. A disordered region spans residues 24–88; sequence PTRPPSQPPS…PSPLPPNIAC (65 aa). Over residues 25–84 the composition is skewed to pro residues; it reads TRPPSQPPSHPPIQPSSQPPTQPPSQPPTQPPTQPPSHPPTQPPTPPPSQSPSQPSPLPP. The interval 74–236 is pectinesterase inhibitor 47; that stretch reads QSPSQPSPLP…TRLYSVSLGL (163 aa). N-linked (GlcNAc...) asparagine glycans are attached at residues Asn225, Asn330, Asn369, and Asn376. A pectinesterase 47 region spans residues 307 to 606; sequence AVTVGPYETD…FTVYNFTLGD (300 aa). A substrate-binding site is contributed by Thr385. N-linked (GlcNAc...) asparagine glycosylation occurs at Asn387. Gln415 contacts substrate. The active-site Proton donor; for pectinesterase activity is Asp438. Cysteines 452 and 472 form a disulfide. Catalysis depends on Asp459, which acts as the Nucleophile; for pectinesterase activity. A glycan (N-linked (GlcNAc...) asparagine) is linked at Asn505. Substrate is bound by residues Arg527 and Trp529. Residues Asn555, Asn596, and Asn601 are each glycosylated (N-linked (GlcNAc...) asparagine).

In the N-terminal section; belongs to the PMEI family. This sequence in the C-terminal section; belongs to the pectinesterase family.

It localises to the secreted. The protein localises to the cell wall. It catalyses the reaction [(1-&gt;4)-alpha-D-galacturonosyl methyl ester](n) + n H2O = [(1-&gt;4)-alpha-D-galacturonosyl](n) + n methanol + n H(+). It participates in glycan metabolism; pectin degradation; 2-dehydro-3-deoxy-D-gluconate from pectin: step 1/5. In terms of biological role, acts in the modification of cell walls via demethylesterification of cell wall pectin. This chain is Probable pectinesterase/pectinesterase inhibitor 47 (PME47), found in Arabidopsis thaliana (Mouse-ear cress).